Reading from the N-terminus, the 289-residue chain is MRPLSGLIALALLLLLLLTAPSSAADTETESSGSPLTPGAEEPRRVVKRAPTSSFIGMRGKKDEEHDTSEGNWLGSGPDPLDYADEEADSSYAENGRRLKKAPLAFVGLRGKKFIPINNRLSDVLQSLEEERLRDSLLQDFFDRVAGRDGSAVGKRAPTGFTGMRGKRPALLAGDDDAEADEATELQQKRAPVNSFVGMRGKKDVSHQHYKRAALSDSYDLRGKQQRFADFNSKFVAVRGKKSDLEGNGVGIGDDHEQALVHPWLYLWGEKRAPNGFLGMRGKRPALFE.

Residues 1-24 form the signal peptide; that stretch reads MRPLSGLIALALLLLLLLTAPSSA. Positions 24–94 are disordered; that stretch reads AADTETESSG…DEEADSSYAE (71 aa). A propeptide spanning residues 25–47 is cleaved from the precursor; that stretch reads ADTETESSGSPLTPGAEEPRRVV. Arginine amide is present on Arg59. The span at 60-69 shows a compositional bias: basic and acidic residues; it reads GKKDEEHDTS. At Asn95 the chain carries Asparagine amide. Arg110 is modified (arginine amide). The residue at position 153 (Val153) is a Valine amide. Arginine amide is present on residues Arg165, Arg200, Arg239, and Arg281. The propeptide occupies 285 to 289; that stretch reads PALFE.

This sequence belongs to the tachykinin family. As to expression, strong expression is seen in a group of 14 cells plus one isolated cell in the midgut of stage 17 embryos. Also expressed in a pair of medially located unidentified cells, just posterior to the brain, and in two lateral groups of cells that may be associated with tracheae. Expression in the larval gut is restricted to cells with endocrine cell-like morphology in the posterior midgut, just anterior to the malphigian tubules. In the brain, expression is detected in a restricted number of neuronal cell bodies. Expression in the adult female gut is restricted to the midgut with no expression detected in the hindgut.

It localises to the secreted. In terms of biological role, tachykinins are active peptides which excite neurons, evoke behavioral responses, are potent vasodilators and secretagogues, and contract (directly or indirectly) many smooth muscles. Stimulates gut muscle contractions. Required for the response to the male sex pheromone CH503 which is transferred from males to females during mating and inhibits courtship behavior by other males. The Gr68a gustatory receptor is required for detection of the pheromone and Gr68a-expressing neurons in the male foreleg relay signals to the suboesophageal zone (SEZ) which leads to courtship suppression through release of tachykinin from a cluster of 8-10 neurons in the SEZ. This chain is Tachykinins, found in Drosophila melanogaster (Fruit fly).